We begin with the raw amino-acid sequence, 194 residues long: MFNFKLVLVGPGGVGKSCLTIQFIAQKFVDEYDPTLEDSYRKQTTVDGEECLLDIYDTAGQEDFSAVRDQYMRTGEGFLCVYSITYLQSFKEIHRLHNHLLKVKDLDSVPFVLVGNKCDLNEYREVSTAEGEELAKKLNCKFLETSAKERINVSESFYELVREVKKARQSNQHSNSQEQNTDQPIKKKKSCNLL.

10–17 is a binding site for GTP; that stretch reads GPGGVGKS. The Effector region motif lies at 32 to 40; that stretch reads YDPTLEDSY. GTP is bound by residues 57–61 and 116–119; these read DTAGQ and NKCD. Positions 168-194 are disordered; the sequence is RQSNQHSNSQEQNTDQPIKKKKSCNLL. Residues 169–180 are compositionally biased toward low complexity; sequence QSNQHSNSQEQN. The residue at position 191 (cysteine 191) is a Cysteine methyl ester. Residue cysteine 191 is the site of S-geranylgeranyl cysteine attachment. A propeptide spans 192-194 (removed in mature form); that stretch reads NLL.

Belongs to the small GTPase superfamily. Ras family.

It localises to the cell membrane. The catalysed reaction is GTP + H2O = GDP + phosphate + H(+). Its function is as follows. Ras proteins bind GDP/GTP and possess intrinsic GTPase activity. In Dictyostelium discoideum (Social amoeba), this protein is Ras-like protein rasS (rasS).